A 317-amino-acid chain; its full sequence is Melanocyte-stimulating hormone receptor (317 aa).

Topologically, residues 1-37 (MRVQGSQRRLLGSLNSTPTATPHLGLAANQTGARCLE) are extracellular. A glycan (N-linked (GlcNAc...) asparagine) is linked at Asn-29. A helical membrane pass occupies residues 38–63 (VSIPDGLFLSLGLVSLVENVLVVTAI). The Cytoplasmic portion of the chain corresponds to 64 to 72 (AKNRNLHSP). A helical membrane pass occupies residues 73-93 (MYCFICCLALSDLLVSGSNML). Residues 94–118 (ETAVTLLLEAGALAARAAVVQQLDN) lie on the Extracellular side of the membrane. A helical transmembrane segment spans residues 119 to 140 (VIDVITCSSMLSSLCFLGAIAV). Topologically, residues 141–163 (DRYISIFYALRYHSIVTLPRARR) are cytoplasmic. Residues 164 to 183 (AIAAIWVASVLCSTLFIAYY) traverse the membrane as a helical segment. The Extracellular portion of the chain corresponds to 184-191 (DHAAVLLC). The helical transmembrane segment at 192 to 211 (LVVFFLAMLVLMAVLYVHML) threads the bilayer. The Cytoplasmic segment spans residues 212 to 240 (ARACQHAQGIARLHKRQRLAHQGFGLKGA). The helical transmembrane segment at 241–266 (ATLTILLGIFFLCWGPFFLHLTLIVL) threads the bilayer. The Extracellular segment spans residues 267 to 279 (CPQHPTCSCIFKN). Residues 280-300 (FNLFLALIICNAIIDPLIYAF) form a helical membrane-spanning segment. Residues 301–317 (RSQELRRTLKEVLLCSW) are Cytoplasmic-facing. Cys-315 carries S-palmitoyl cysteine lipidation.

This sequence belongs to the G-protein coupled receptor 1 family. Interacts with MGRN1, but does not undergo MGRN1-mediated ubiquitination; this interaction competes with GNAS-binding and thus inhibits agonist-induced cAMP production. Interacts with OPN3; the interaction results in a decrease in MC1R-mediated cAMP signaling and ultimately a decrease in melanin production in melanocytes.

It localises to the cell membrane. Functionally, receptor for MSH (alpha, beta and gamma) and ACTH. The activity of this receptor is mediated by G proteins which activate adenylate cyclase. Mediates melanogenesis, the production of eumelanin (black/brown) and phaeomelanin (red/yellow), via regulation of cAMP signaling in melanocytes. The chain is Melanocyte-stimulating hormone receptor (MC1R) from Macaca nigra (Celebes black macaque).